The following is a 640-amino-acid chain: UvrABC system protein C (640 aa).

The region spanning N22 to V101 is the GIY-YIG domain. A UVR domain is found at D211–L246.

The protein belongs to the UvrC family. Interacts with UvrB in an incision complex.

It localises to the cytoplasm. Its function is as follows. The UvrABC repair system catalyzes the recognition and processing of DNA lesions. UvrC both incises the 5' and 3' sides of the lesion. The N-terminal half is responsible for the 3' incision and the C-terminal half is responsible for the 5' incision. The chain is UvrABC system protein C from Prochlorococcus marinus (strain NATL2A).